A 163-amino-acid chain; its full sequence is Nucleotide-binding protein YajQ (163 aa).

The protein belongs to the YajQ family.

Its function is as follows. Nucleotide-binding protein. The chain is Nucleotide-binding protein YajQ from Salmonella typhi.